The chain runs to 270 residues: tRNA pseudouridine synthase A (270 aa).

The active-site Nucleophile is D60. An RNA binding region spans residues 107–111; sequence FHARF. Residue Y118 coordinates substrate. The interaction with tRNA stretch occupies residues 168–172; the sequence is QCQSR.

Belongs to the tRNA pseudouridine synthase TruA family. As to quaternary structure, homodimer.

The catalysed reaction is uridine(38/39/40) in tRNA = pseudouridine(38/39/40) in tRNA. Formation of pseudouridine at positions 38, 39 and 40 in the anticodon stem and loop of transfer RNAs. The chain is tRNA pseudouridine synthase A from Escherichia coli (strain K12 / DH10B).